A 199-amino-acid chain; its full sequence is uncharacterized protein (199 aa).

Residues Ala17–Ile37 traverse the membrane as a helical segment.

The protein localises to the membrane. This is an uncharacterized protein from Homo sapiens (Human).